A 966-amino-acid polypeptide reads, in one-letter code: Polycystin-2 (966 aa).

The interval 1–106 (MVNSRRVQPQ…DDDEVEGEEG (106 aa)) is disordered. Topologically, residues 1–217 (MVNSRRVQPQ…NANREKYLKS (217 aa)) are cytoplasmic. A compositionally biased stretch (gly residues) spans 30 to 44 (VAGGAGLAVPGGLGE). Basic and acidic residues predominate over residues 46–56 (RGLEIEMERIR). The span at 58–79 (AAARDPPAGASASPSPPLSSCS) shows a compositional bias: low complexity. Ser72 and Ser76 each carry phosphoserine. Residues 91–105 (EAEEDDDDDEVEGEE) show a composition bias toward acidic residues. Arg135 carries the omega-N-methylarginine modification. Residues 147-179 (HLSGRRRRLEDQGAQCPSPAGGGDPLHRHLPLE) form a disordered region. The chain crosses the membrane as a helical span at residues 218 to 239 (VLRELVTYLFFLVVLCILTYGM). The Extracellular segment spans residues 240–466 (MSSNVYYYTR…PVKLIRYVTA (227 aa)). 3 N-linked (GlcNAc...) asparagine glycosylation sites follow: Asn297, Asn303, and Asn326. Cys329 and Cys342 form a disulfide bridge. N-linked (GlcNAc...) asparagine glycans are attached at residues Asn360 and Asn373. The helical transmembrane segment at 467-487 (FDFFLAACEIIFCFFIIYYVV) threads the bilayer. Topologically, residues 488–503 (EEILEIRIHRLSYFRS) are cytoplasmic. Residues 504 to 524 (FWNCLDVVIVVLSVVAMVINI) traverse the membrane as a helical segment. Topologically, residues 525–550 (YRMSNAEGLLQFLEDQNSFPNFEHVA) are extracellular. The chain crosses the membrane as a helical span at residues 551–571 (YWQIQFNNISAVMVFLVWIKL). A cholesterol-binding site is contributed by Gln555. Topologically, residues 572–595 (FKFINFNRTMSQLSTTMSRCAKDL) are cytoplasmic. The helical transmembrane segment at 596–617 (FGFTIMFSIIFLAYAQLAYLVF) threads the bilayer. The Extracellular segment spans residues 618-629 (GTQVDDFSTFQE). The pore-forming intramembrane region spans 630-644 (CIFTQFRIILGDINF). Leu639 provides a ligand contact to Ca(2+). Residues 639–641 (LGD) carry the Selectivity filter motif. The Extracellular segment spans residues 645 to 652 (AEIEEANR). Residues 653–673 (VLGPLYFTTFVFFMFFILLNM) form a helical membrane-spanning segment. Residues 674-966 (FLAIINDSYS…GGNGSANVHA (293 aa)) are Cytoplasmic-facing. An EF-hand domain is found at 748–783 (HTDAEIEAIFTKYDQDGDQELTEREHQQMRDDLEKE). Residues Asp761, Asp763, Asp765, Glu767, and Glu772 each coordinate Ca(2+). The tract at residues 764–828 (GDQELTEREH…GHSSRRRGSI (65 aa)) is disordered. Positions 768–793 (LTEREHQQMRDDLEKEREDLDLEHSS) are enriched in basic and acidic residues. Positions 794 to 805 (LPRPMSSRSFPR) are enriched in low complexity. Residues Ser799, Ser806, Ser810, and Ser827 each carry the phosphoserine modification. A linker region spans residues 801-820 (RSFPRSLDDSEEEDDEDSGH). The interval 808–819 (DDSEEEDDEDSG) is important for interaction with PACS1 and PACS2. Residues 831–870 (GVSYEEFQVLVRRVDRMEHSIGSIVSKIDAVIVKLEIMER) adopt a coiled-coil conformation. A disordered region spans residues 914–966 (WESDDAASQTGHGVSTQVGLGGQPHPRNPRPPSSQSAEGLEGGGGNGSANVHA). The span at 919-931 (AASQTGHGVSTQV) shows a compositional bias: polar residues.

This sequence belongs to the polycystin family. In terms of assembly, homotetramer. Component of the heterotetrameric polycystin channel complex with PKD1; the tetramer contains one PKD1 chain and three PKD2 chains. Interaction with PKD1 is required for ciliary localization. Isoform 1 interacts with PKD1 while isoform 3 does not. Interacts with PKD1L1. Interacts with CD2AP. Interacts with HAX1. Interacts with NEK8. Part of a complex containing AKAP5, ADCY5, ADCY6 and PDE4C. Interacts (via C-terminus) with TRPV4 (via C-terminus). Interacts (via C-terminal acidic region) with PACS1 and PACS2; these interactions retain the protein in the endoplasmic reticulum and prevent trafficking to the cell membrane. Interacts with TMEM33; enhancing its opening at the ER membrane. Interacts with TMEM120A; TMEM120A inhibits PKD2 channel activity through the physical association of PKD2 with TMEM120A. Interacts (via N-terminus) with RYR2; regulates RYR2 channel activity. Post-translationally, N-glycosylated. The four subunits in a tetramer probably differ in the extent of glycosylation; simultaneous glycosylation of all experimentally validated sites would probably create steric hindrance. In terms of processing, sumoylated by SUMO1; sumoylation regulates PKD2 membrane recycling and is necessary for intravascular pressure-induced arterial contractility. Phosphorylated. Phosphorylation is important for protein function; a mutant that lacks the N-terminal phosphorylation sites cannot complement a zebrafish pkd2-deficient mutant. PKD-mediated phosphorylation at the C-terminus regulates its function in the release of Ca(2+) stores from the endoplasmic reticulum. Phosphorylation at Ser-810 regulates PKD2 trafficking. Phosphorylation at Ser-72 is required for PKD2 trafficking to or retention at the lateral plasma membrane. Phosphorylation at Ser-799, Ser-810 and Ser-827 regulates PKD2 channel activity. Detected in kidney epithelium (at protein level). Highly expressed on basolateral membranes in distal convoluted tubules and medullary thick ascending limbs of Henle. Detected at much lower levels in cortical and medullary collecting tubules, and not detected in the glomerular tuft, in thin limbs of Henle, interstitium and blood vessels (at protein level). Expressed in mesenchymally derived structures in the developing embryo at day 12.5. Isoform 1 is predominantly expressed in kidney at all developmental stages with high levels also detected in lung. Isoform 3 shows highest expression in brain with lower expression in kidney and lung, low levels in thymus and is hardly detectable in liver.

It localises to the cell projection. The protein resides in the cilium membrane. It is found in the cell membrane. The protein localises to the basolateral cell membrane. Its subcellular location is the cytoplasmic vesicle membrane. It localises to the endoplasmic reticulum membrane. The protein resides in the golgi apparatus. It is found in the vesicle. The protein localises to the secreted. Its subcellular location is the extracellular exosome. The enzyme catalyses K(+)(in) = K(+)(out). It catalyses the reaction Na(+)(in) = Na(+)(out). It carries out the reaction Ca(2+)(in) = Ca(2+)(out). Channel activity is regulated by phosphorylation. The channel is activated by increased cytoplasmic Ca(2+) (in the uM range) and by membrane depolarization. TMEM120A inhibits the channel activity of PKD2, and mediates mechanosensitivity of the PKD2-TMEM120A channel complex. At the endoplasmic reticulum membrane (ER), TMEM33 enhances its channel activity. PKD1/ PKD2 complex on the plasma membrane is activated by PKD1 N-terminus. Functionally, forms a nonselective cation channel. Can function as a homotetrameric ion channel or can form heteromer with PKD1. Displays distinct function depending on its subcellular localization and regulation by its binding partners. Functions as a cation channel, with a preference for monovalent cations over divalent cations that allows K(+), Na(+) and Ca(2+) influx, with low selectivity for Ca(2+). Involved in fluid-flow mechanosensation by the primary cilium in renal epithelium. In the endoplasmic reticulum, likely functions as a K(+) channel to facilitate Ca(2+) release. The heterotetrameric PKD1/PKD2 channel has higher Ca(2+) permeability than homomeric PKD2 channel and acts as a primarily Ca(2+)-permeable channel. PKD1 and PKD2 may function through a common signaling pathway that is necessary to maintain the normal, differentiated state of renal tubule cells. Interacts with and acts as a regulator of a number of other channels, such as TRPV4, TRPC1, IP3R, RYR2, ultimately further affecting intracellular signaling, to modulate intracellular Ca(2+) signaling. Together with TRPV4, forms mechano- and thermosensitive channels in cilium. In cardiomyocytes, PKD2 modulates Ca(2+) release from stimulated RYR2 receptors through direct association. Also involved in left-right axis specification via its role in sensing nodal flow; forms a complex with PKD1L1 in cilia to facilitate flow detection in left-right patterning. Acts as a regulator of cilium length together with PKD1. Mediates systemic blood pressure and contributes to the myogenic response in cerebral arteries though vasoconstriction. The protein is Polycystin-2 of Mus musculus (Mouse).